Consider the following 553-residue polypeptide: Hydroxylamine reductase (553 aa).

[2Fe-2S] cluster-binding residues include C3, C6, C18, and C25. Positions 252, 276, 320, 408, 436, 461, 495, and 497 each coordinate hybrid [4Fe-2O-2S] cluster. C408 is subject to Cysteine persulfide.

The protein belongs to the HCP family. It depends on [2Fe-2S] cluster as a cofactor. Hybrid [4Fe-2O-2S] cluster serves as cofactor.

It localises to the cytoplasm. It carries out the reaction A + NH4(+) + H2O = hydroxylamine + AH2 + H(+). Its function is as follows. Catalyzes the reduction of hydroxylamine to form NH(3) and H(2)O. The chain is Hydroxylamine reductase from Aliivibrio fischeri (strain MJ11) (Vibrio fischeri).